Reading from the N-terminus, the 532-residue chain is Bifunctional purine biosynthesis protein PurH (532 aa).

Residues 1-147 (MAKIKRALIS…KNYRSVTVVT (147 aa)) form the MGS-like domain.

It belongs to the PurH family.

The catalysed reaction is (6R)-10-formyltetrahydrofolate + 5-amino-1-(5-phospho-beta-D-ribosyl)imidazole-4-carboxamide = 5-formamido-1-(5-phospho-D-ribosyl)imidazole-4-carboxamide + (6S)-5,6,7,8-tetrahydrofolate. It catalyses the reaction IMP + H2O = 5-formamido-1-(5-phospho-D-ribosyl)imidazole-4-carboxamide. The protein operates within purine metabolism; IMP biosynthesis via de novo pathway; 5-formamido-1-(5-phospho-D-ribosyl)imidazole-4-carboxamide from 5-amino-1-(5-phospho-D-ribosyl)imidazole-4-carboxamide (10-formyl THF route): step 1/1. It participates in purine metabolism; IMP biosynthesis via de novo pathway; IMP from 5-formamido-1-(5-phospho-D-ribosyl)imidazole-4-carboxamide: step 1/1. The sequence is that of Bifunctional purine biosynthesis protein PurH from Magnetococcus marinus (strain ATCC BAA-1437 / JCM 17883 / MC-1).